The following is a 168-amino-acid chain: uncharacterized protein (168 aa).

It localises to the mitochondrion. This is an uncharacterized protein from Marchantia polymorpha (Common liverwort).